The following is a 572-amino-acid chain: Urease subunit alpha (572 aa).

In terms of domain architecture, Urease spans 134–572 (GGIDAHVHMI…VSLGQLYFFS (439 aa)). 3 residues coordinate Ni(2+): His139, His141, and Lys222. An N6-carboxylysine modification is found at Lys222. His224 contacts substrate. Positions 251 and 277 each coordinate Ni(2+). His325 functions as the Proton donor in the catalytic mechanism. A Ni(2+)-binding site is contributed by Asp365.

The protein belongs to the metallo-dependent hydrolases superfamily. Urease alpha subunit family. As to quaternary structure, heterotrimer of UreA (gamma), UreB (beta) and UreC (alpha) subunits. Three heterotrimers associate to form the active enzyme. Ni cation is required as a cofactor. Post-translationally, carboxylation allows a single lysine to coordinate two nickel ions.

The protein localises to the cytoplasm. It catalyses the reaction urea + 2 H2O + H(+) = hydrogencarbonate + 2 NH4(+). The protein operates within nitrogen metabolism; urea degradation; CO(2) and NH(3) from urea (urease route): step 1/1. This Laribacter hongkongensis (strain HLHK9) protein is Urease subunit alpha.